A 113-amino-acid chain; its full sequence is Cytochrome c2 (113 aa).

Heme c contacts are provided by cysteine 15, cysteine 18, histidine 19, and methionine 92.

The protein belongs to the cytochrome c family. Binds 1 heme c group covalently per subunit.

Cytochrome c2 is found mainly in purple, non-sulfur, photosynthetic bacteria where it functions as the electron donor to the oxidized bacteriochlorophyll in the photophosphorylation pathway. However, it may also have a role in the respiratory chain and is found in some non-photosynthetic bacteria. The polypeptide is Cytochrome c2 (Pararhodospirillum photometricum (Rhodospirillum photometricum)).